The primary structure comprises 286 residues: Sulfur carrier protein FdhD (286 aa).

C110 serves as the catalytic Cysteine persulfide intermediate. 247–252 (FARGEK) lines the Mo-bis(molybdopterin guanine dinucleotide) pocket.

Belongs to the FdhD family.

The protein localises to the cytoplasm. Its function is as follows. Required for formate dehydrogenase (FDH) activity. Acts as a sulfur carrier protein that transfers sulfur from IscS to the molybdenum cofactor prior to its insertion into FDH. The polypeptide is Sulfur carrier protein FdhD (Wolinella succinogenes (strain ATCC 29543 / DSM 1740 / CCUG 13145 / JCM 31913 / LMG 7466 / NCTC 11488 / FDC 602W) (Vibrio succinogenes)).